The primary structure comprises 412 residues: MALVNHRENVKGRAQILAIGTANPKNCFRQVDYPDYYFRVTKSDHLIDLKAKFKRMCEKSMIEKRYMHVNEEILEQNPSMNHGGEKMVSSLDVRLDMEIMEIPKLAAEAATKAMDEWGQPKSRITHLVFHSTLGTVMPGVDYELIKLLGLNPSVKRFMLYHLGCYGGGTVLRLAKDLAENNPGSRVLVLCCEMMPSGFHGPPSLQHAHLDILTGHAIFGDGAGAVIVGCVDPSGGTNGVVERGVRRYEQPLFEIHSAYQTVLPDSKDAVGGRLREAGLIYYLSKRLSNDVSGKIDECCLAEAFSAAIKDNFEDWNSLFWIVHPAGRPILDKLDAKLGLNKEKLRASRNVLRDYGNMWSSSVLFVLDEMRKGSIAQRKTTTGEGFEWGVLLGFGPGVTVETVVLRSVPTAKLK.

Active-site residues include C164, H322, and N355.

Belongs to the thiolase-like superfamily. Chalcone/stilbene synthases family. In terms of assembly, homodimer. Mainly expressed in young leaves, and barely in mature leaves and twigs.

The enzyme catalyses 3 malonyl-CoA + acetyl-CoA + 3 H(+) = orcinol + 4 CO2 + 4 CoA. The catalysed reaction is 3 malonyl-CoA + acetyl-CoA + 2 H(+) = orsellinate + 3 CO2 + 4 CoA. It carries out the reaction 3 malonyl-CoA + acetyl-CoA + 3 H(+) = tetraacetate lactone + 3 CO2 + 4 CoA. It catalyses the reaction 2 malonyl-CoA + acetyl-CoA + 2 H(+) = triacetate lactone + 2 CO2 + 3 CoA. The enzyme catalyses 3 malonyl-CoA + acetyl-CoA + 3 H(+) = 2-acetylphloroglucinol + 3 CO2 + 4 CoA. It functions in the pathway secondary metabolite biosynthesis; terpenoid biosynthesis. In terms of biological role, involved in the biosynthesis of acetate-derived aromatic tetraketides natural products, precursors of daurichromenic acid, an anti-human immunodeficiency viruses (HIV) meroterpenoid consisting of sesquiterpene and orsellinic acid (OSA) moieties. Accepts acetyl-CoA as starter substrate and produces orcinol as the major reaction product, along with four minor products including OSA, tetraacetate lactone, triacetate lactone and 2-acetylphloroglucinol. The sequence is that of Orcinol synthase from Rhododendron dauricum (Azalea daurica).